The following is a 465-amino-acid chain: Ribulose bisphosphate carboxylase large chain (465 aa).

Lysine 4 bears the N6,N6,N6-trimethyllysine mark. Substrate is bound by residues asparagine 113 and threonine 163. The active-site Proton acceptor is lysine 165. Lysine 167 lines the substrate pocket. Mg(2+) contacts are provided by lysine 191, aspartate 193, and glutamate 194. Lysine 191 carries the N6-carboxylysine modification. The active-site Proton acceptor is the histidine 284. Arginine 285, histidine 317, and serine 369 together coordinate substrate.

It belongs to the RuBisCO large chain family. Type I subfamily. In terms of assembly, heterohexadecamer of 8 large chains and 8 small chains; disulfide-linked. The disulfide link is formed within the large subunit homodimers. Mg(2+) serves as cofactor. Post-translationally, the disulfide bond which can form in the large chain dimeric partners within the hexadecamer appears to be associated with oxidative stress and protein turnover.

It localises to the plastid. The protein resides in the chloroplast. It catalyses the reaction 2 (2R)-3-phosphoglycerate + 2 H(+) = D-ribulose 1,5-bisphosphate + CO2 + H2O. The catalysed reaction is D-ribulose 1,5-bisphosphate + O2 = 2-phosphoglycolate + (2R)-3-phosphoglycerate + 2 H(+). Functionally, ruBisCO catalyzes two reactions: the carboxylation of D-ribulose 1,5-bisphosphate, the primary event in carbon dioxide fixation, as well as the oxidative fragmentation of the pentose substrate in the photorespiration process. Both reactions occur simultaneously and in competition at the same active site. The sequence is that of Ribulose bisphosphate carboxylase large chain from Ephedra tweediana (Vining horsetail).